The following is a 620-amino-acid chain: E3 ubiquitin-protein ligase AMFR (620 aa).

The next 7 helical transmembrane spans lie at 75-95, 115-135, 138-158, 179-199, 201-221, 247-267, and 269-289; these read LFVW…GKVI, FWNF…VQRV, VVLW…VQLC, VLAL…LCAL, GHIH…LVTV, SSYI…LDLM, and HIHM…VIFM. The RING-type; atypical zinc finger occupies 334–372; it reads CAICWDSMTTARKLPCGHLFHNSCLRSWLEQDTSCPTCR. One can recognise a CUE domain in the interval 449 to 491; the sequence is QLNGMAHQIQEMFPQVPYHLILQDLQLTRSVEVTTDNILEGRI. Positions 510–526 are enriched in low complexity; it reads ASEDGAGASSGSEVAAP. 2 disordered regions span residues 510–544 and 569–598; these read ASED…SADE and PEDG…DSVT. Residues 531–544 show a composition bias toward basic and acidic residues; it reads FEVRGSRFSKSADE. Over residues 581 to 595 the composition is skewed to acidic residues; it reads DNDDSVPSIEDEDSD.

As to expression, widely expressed.

The protein localises to the endoplasmic reticulum membrane. It catalyses the reaction [E2 ubiquitin-conjugating enzyme]-S-ubiquitinyl-L-cysteine + [acceptor protein]-L-cysteine = [E2 ubiquitin-conjugating enzyme]-L-cysteine + [acceptor protein]-S-ubiquitinyl-L-cysteine.. It participates in protein modification; protein ubiquitination. Its function is as follows. E3 ubiquitin-protein ligase that mediates the polyubiquitination of lysine and cysteine residues on target proteins. May participate in the final step of endoplasmic reticulum-associated degradation (ERAD). Required for proper lipid homeostasis. The sequence is that of E3 ubiquitin-protein ligase AMFR from Danio rerio (Zebrafish).